Here is a 180-residue protein sequence, read N- to C-terminus: Putative phycocyanobilin lyase CpcS 2 (180 aa).

It belongs to the CpcS/CpeS biliprotein lyase family.

In terms of biological role, covalently attaches a chromophore to Cys residue(s) of phycobiliproteins (Potential). In vitro does not act as a chromophore lyase for ApcA1, ApcA2, ApcB, ApcD, ApcF, CpcB or PecB, the lyase activity is therefore unsure. This chain is Putative phycocyanobilin lyase CpcS 2 (cpeS2), found in Nostoc sp. (strain PCC 7120 / SAG 25.82 / UTEX 2576).